Here is a 621-residue protein sequence, read N- to C-terminus: Cystathionine gamma-synthase (621 aa).

Position 429 is an N6-(pyridoxal phosphate)lysine (Lys429).

The protein belongs to the trans-sulfuration enzymes family. MET7 subfamily. In terms of assembly, both met-3 and met-7 are required to form a functional cystathionine gamma-synthase. Pyridoxal 5'-phosphate is required as a cofactor.

It carries out the reaction O-succinyl-L-homoserine + L-cysteine = L,L-cystathionine + succinate + H(+). It participates in amino-acid biosynthesis; L-methionine biosynthesis via de novo pathway; L-cystathionine from O-succinyl-L-homoserine: step 1/1. Catalyzes the formation of L-cystathionine from O-succinyl-L-homoserine (OSHS) and L-cysteine, via a gamma-replacement reaction. In the absence of thiol, catalyzes gamma-elimination to form 2-oxobutanoate, succinate and ammonia. This chain is Cystathionine gamma-synthase (met-7), found in Neurospora crassa (strain ATCC 24698 / 74-OR23-1A / CBS 708.71 / DSM 1257 / FGSC 987).